Reading from the N-terminus, the 159-residue chain is Large ribosomal subunit protein uL15 (159 aa).

Positions 21 to 34 (LRPAPGAHKSKIRV) are enriched in basic residues. Positions 21–55 (LRPAPGAHKSKIRVGRGEGSKGKTAGRGTKGSKAR) are disordered.

Belongs to the universal ribosomal protein uL15 family. As to quaternary structure, part of the 50S ribosomal subunit.

Binds to the 23S rRNA. This chain is Large ribosomal subunit protein uL15, found in Frankia casuarinae (strain DSM 45818 / CECT 9043 / HFP020203 / CcI3).